We begin with the raw amino-acid sequence, 214 residues long: Probable transaldolase (214 aa).

The Schiff-base intermediate with substrate role is filled by lysine 83.

This sequence belongs to the transaldolase family. Type 3B subfamily.

The protein localises to the cytoplasm. The catalysed reaction is D-sedoheptulose 7-phosphate + D-glyceraldehyde 3-phosphate = D-erythrose 4-phosphate + beta-D-fructose 6-phosphate. Its pathway is carbohydrate degradation; pentose phosphate pathway; D-glyceraldehyde 3-phosphate and beta-D-fructose 6-phosphate from D-ribose 5-phosphate and D-xylulose 5-phosphate (non-oxidative stage): step 2/3. Its function is as follows. Transaldolase is important for the balance of metabolites in the pentose-phosphate pathway. In Maridesulfovibrio salexigens (strain ATCC 14822 / DSM 2638 / NCIMB 8403 / VKM B-1763) (Desulfovibrio salexigens), this protein is Probable transaldolase.